Consider the following 423-residue polypeptide: Protein SOSEKI 5 (423 aa).

The interval 1 to 33 (MSSRVFRATPDNNYLVPRRSKDQQDTSPDRNRI) is disordered. Positions 19–33 (RSKDQQDTSPDRNRI) are enriched in basic and acidic residues. The DIX-like oligomerization domain stretch occupies residues 45 to 136 (RKVPVVYYLC…YVLKGSEVLD (92 aa)). Disordered stretches follow at residues 150-172 (SSFRDPRSLNPDKNSGDDIPAVI) and 196-258 (SSAE…SPET). Residues 196–211 (SSAESTQRLAADASTQ) are compositionally biased toward polar residues. 2 short sequence motifs (association to cell membranes) span residues 233–234 (AS) and 303–304 (CG). Residues 379–423 (SSSYNADRCSRMGPTTEKDEEEAVRAKCIPRKPKPVAKRNNGGQQ) are disordered. A compositionally biased stretch (basic residues) spans 406 to 415 (CIPRKPKPVA).

It belongs to the SOSEKI family. In terms of assembly, homodimer. Forms long polymer filaments with other SOKs proteins polymers (e.g. SOK1, SOK2, SOK3 and SOK4) crucial for polar localization and biological activity. Binds to ANGUSTIFOLIA (AN). In terms of tissue distribution, expressed during embryogenesis and in roots.

Its subcellular location is the cell membrane. In terms of biological role, SOSEKI proteins (SOK1-5) locally interpret global polarity cues and can influence cell division orientation to coordinate cell polarization relative to body axes. In Arabidopsis thaliana (Mouse-ear cress), this protein is Protein SOSEKI 5.